Consider the following 213-residue polypeptide: Amelotin (213 aa).

Residues 1-16 (MKTMILLLCLLGSAQS) form the signal peptide. Disordered regions lie at residues 22–43 (NPAS…LPQQ) and 162–213 (GAKA…NRTQ). Polar residues predominate over residues 33–43 (TPGQVTPLPQQ). Low complexity predominate over residues 169-180 (GTTPGHVTTPGV).

The protein belongs to the amelotin family. In terms of processing, phosphorylated by FAM20C in vitro. Post-translationally, O-glycosylated. In terms of tissue distribution, specifically expressed in maturation-stage ameloblasts.

It is found in the secreted. Functionally, is a promoter of calcium phosphate mineralization, playing a critical role in the formation of the compact, mineralized, aprismatic enamel surface layer during the maturation stage of amelogenesis. The polypeptide is Amelotin (Amtn) (Mus musculus (Mouse)).